The primary structure comprises 186 residues: Putative 5'(3')-deoxyribonucleotidase (186 aa).

The active-site Nucleophile is Asp6. Residues Asp6, Asp8, and Asp137 each contribute to the Mg(2+) site. Catalysis depends on Asp8, which acts as the Proton donor.

This sequence belongs to the 5'(3')-deoxyribonucleotidase family. Mg(2+) serves as cofactor.

Functionally, dephosphorylates the 5' and 2'(3')-phosphates of deoxyribonucleotides. In Bordetella pertussis (strain Tohama I / ATCC BAA-589 / NCTC 13251), this protein is Putative 5'(3')-deoxyribonucleotidase.